Consider the following 256-residue polypeptide: Small ribosomal subunit protein eS1 (256 aa).

The segment covering 1–18 (MAVGKNKRLSKGKKGLKK) has biased composition (basic residues). Residues 1-22 (MAVGKNKRLSKGKKGLKKKTQD) are disordered. A2 bears the N-acetylalanine; partial mark.

The protein belongs to the eukaryotic ribosomal protein eS1 family. In terms of assembly, component of the small ribosomal subunit. Mature ribosomes consist of a small (40S) and a large (60S) subunit. The 40S subunit contains about 33 different proteins and 1 molecule of RNA (18S). The 60S subunit contains about 49 different proteins and 3 molecules of RNA (25S, 5.8S and 5S).

Its subcellular location is the cytoplasm. The protein is Small ribosomal subunit protein eS1 of Pyricularia oryzae (strain Y34) (Rice blast fungus).